Reading from the N-terminus, the 240-residue chain is Regulatory protein RecX (240 aa).

The protein belongs to the RecX family.

The protein resides in the cytoplasm. Functionally, modulates RecA activity. The sequence is that of Regulatory protein RecX from Lacticaseibacillus paracasei (strain ATCC 334 / BCRC 17002 / CCUG 31169 / CIP 107868 / KCTC 3260 / NRRL B-441) (Lactobacillus paracasei).